The sequence spans 317 residues: Dehydrogenase/reductase SDR family member 12 (317 aa).

Residues S50 and I52 each coordinate NAD(+). S175 is a binding site for substrate. Residues Y201, K205, and T234 each coordinate NAD(+). Y201 (proton acceptor) is an active-site residue.

Belongs to the short-chain dehydrogenases/reductases (SDR) family.

Putative oxidoreductase. In Bos taurus (Bovine), this protein is Dehydrogenase/reductase SDR family member 12 (DHRS12).